Here is an 85-residue protein sequence, read N- to C-terminus: UPF0386 protein TM1040_0419 (85 aa).

Residues 62–85 form a disordered region; that stretch reads SKSSRPYQISEKGRRSVRAQLDNR.

Belongs to the UPF0386 family.

The polypeptide is UPF0386 protein TM1040_0419 (Ruegeria sp. (strain TM1040) (Silicibacter sp.)).